A 95-amino-acid chain; its full sequence is Aspartyl/glutamyl-tRNA(Asn/Gln) amidotransferase subunit C (95 aa).

It belongs to the GatC family. As to quaternary structure, heterotrimer of A, B and C subunits.

The enzyme catalyses L-glutamyl-tRNA(Gln) + L-glutamine + ATP + H2O = L-glutaminyl-tRNA(Gln) + L-glutamate + ADP + phosphate + H(+). It carries out the reaction L-aspartyl-tRNA(Asn) + L-glutamine + ATP + H2O = L-asparaginyl-tRNA(Asn) + L-glutamate + ADP + phosphate + 2 H(+). In terms of biological role, allows the formation of correctly charged Asn-tRNA(Asn) or Gln-tRNA(Gln) through the transamidation of misacylated Asp-tRNA(Asn) or Glu-tRNA(Gln) in organisms which lack either or both of asparaginyl-tRNA or glutaminyl-tRNA synthetases. The reaction takes place in the presence of glutamine and ATP through an activated phospho-Asp-tRNA(Asn) or phospho-Glu-tRNA(Gln). In Phenylobacterium zucineum (strain HLK1), this protein is Aspartyl/glutamyl-tRNA(Asn/Gln) amidotransferase subunit C.